Here is a 515-residue protein sequence, read N- to C-terminus: 2-isopropylmalate synthase (515 aa).

Positions 5–268 constitute a Pyruvate carboxyltransferase domain; it reads VIIFDTTLRD…VCGIDATQIV (264 aa). Mn(2+) is bound by residues aspartate 14, histidine 202, histidine 204, and asparagine 239. The regulatory domain stretch occupies residues 394-515; it reads KFISLSQHSE…QAKLNAQMTP (122 aa).

Belongs to the alpha-IPM synthase/homocitrate synthase family. LeuA type 1 subfamily. Homodimer. Mn(2+) is required as a cofactor.

The protein resides in the cytoplasm. It catalyses the reaction 3-methyl-2-oxobutanoate + acetyl-CoA + H2O = (2S)-2-isopropylmalate + CoA + H(+). The protein operates within amino-acid biosynthesis; L-leucine biosynthesis; L-leucine from 3-methyl-2-oxobutanoate: step 1/4. Its function is as follows. Catalyzes the condensation of the acetyl group of acetyl-CoA with 3-methyl-2-oxobutanoate (2-ketoisovalerate) to form 3-carboxy-3-hydroxy-4-methylpentanoate (2-isopropylmalate). This Polynucleobacter necessarius subsp. necessarius (strain STIR1) protein is 2-isopropylmalate synthase.